Here is a 1041-residue protein sequence, read N- to C-terminus: Beta-galactosidase (1041 aa).

2 residues coordinate substrate: Asn-103 and Asp-201. Na(+) is bound at residue Asp-201. Mg(2+) contacts are provided by Glu-415, His-417, and Glu-460. Residues Glu-460 and 536–539 (EYAH) contribute to the substrate site. Catalysis depends on Glu-460, which acts as the Proton donor. Residue Glu-536 is the Nucleophile of the active site. Asn-596 serves as a coordination point for Mg(2+). 2 residues coordinate Na(+): Phe-600 and Asn-603. The substrate site is built by Asn-603 and Trp-1016.

It belongs to the glycosyl hydrolase 2 family. As to quaternary structure, homotetramer. Mg(2+) serves as cofactor. Requires Na(+) as cofactor.

It carries out the reaction Hydrolysis of terminal non-reducing beta-D-galactose residues in beta-D-galactosides.. This is Beta-galactosidase from Alteromonas mediterranea (strain DSM 17117 / CIP 110805 / LMG 28347 / Deep ecotype).